The following is a 491-amino-acid chain: MFSKILVANRGEIAIRVMRACRELGIKSVAVYSEADKNALFTRYADEAYEIGKPAPSQSYLRIDRILEVAEKAGAEAIHPGYGFLAENPRLGEECEKQGIKLIGPKGSVIEAMGDKITSKKLMKKAGVPVIPGTDQGVSDPDEAARIADSIGYPVIIKASAGGGGIGMRAVYEEDELIRAMESTQSVAASAFGDPTVYIEKYLERPRHIEFQVMADESGNVIHLADRECSIQRRHQKLIEEAPSPIMTPELRERMGSAAVKAAEYIGYENAGTVEFLYSNGDFYFLEMNTRIQVEHPITEVITGVDLVKEQIRVASGEELRFTQKDINIRGHAIECRINAENPLADFAPNPGKITGYRSPGGIGVRVDSGVYMNYEIPPFYDSMISKLIVWGMDRQEAINRMKRALSEYIILGVKTTIPFHKAIMRNEAFRRGELHTHFVDEYRRGIDAEMRKIVKEDQEMVERLQSTFLPSKKVAAISAAIGTYMHSRRG.

Residues 1–445 (MFSKILVANR…HTHFVDEYRR (445 aa)) form the Biotin carboxylation domain. The ATP site is built by Lys116, Glu200, and His235. The ATP-grasp domain maps to 120–316 (KKLMKKAGVP…LVKEQIRVAS (197 aa)). Arg291 is a catalytic residue.

Heterooctamer of four A and four B subunits. It depends on Mg(2+) as a cofactor. Mn(2+) serves as cofactor. Requires Co(2+) as cofactor.

It carries out the reaction hydrogencarbonate + pyruvate + ATP = oxaloacetate + ADP + phosphate + H(+). It participates in carbohydrate biosynthesis; gluconeogenesis. With respect to regulation, inhibited by ADP and alpha-ketoglutarate. Its function is as follows. Pyruvate carboxylase catalyzes a 2-step reaction, involving the ATP-dependent carboxylation of the covalently attached biotin in the first step and the transfer of the carboxyl group to pyruvate in the second. The chain is Pyruvate carboxylase subunit A (pycA) from Methanothermobacter thermautotrophicus (strain ATCC 29096 / DSM 1053 / JCM 10044 / NBRC 100330 / Delta H) (Methanobacterium thermoautotrophicum).